Reading from the N-terminus, the 436-residue chain is Exodeoxyribonuclease 7 large subunit (436 aa).

The interval 412–436 (PGGVMNKNSNTTDSTDNTENGTGEA) is disordered. Over residues 417 to 436 (NKNSNTTDSTDNTENGTGEA) the composition is skewed to low complexity.

Belongs to the XseA family. As to quaternary structure, heterooligomer composed of large and small subunits.

It is found in the cytoplasm. It catalyses the reaction Exonucleolytic cleavage in either 5'- to 3'- or 3'- to 5'-direction to yield nucleoside 5'-phosphates.. Functionally, bidirectionally degrades single-stranded DNA into large acid-insoluble oligonucleotides, which are then degraded further into small acid-soluble oligonucleotides. This chain is Exodeoxyribonuclease 7 large subunit, found in Corynebacterium jeikeium (strain K411).